The chain runs to 403 residues: DNA replication and repair protein RecF (403 aa).

G30–T37 is a binding site for ATP.

This sequence belongs to the RecF family.

The protein resides in the cytoplasm. Functionally, the RecF protein is involved in DNA metabolism; it is required for DNA replication and normal SOS inducibility. RecF binds preferentially to single-stranded, linear DNA. It also seems to bind ATP. This chain is DNA replication and repair protein RecF, found in Bifidobacterium adolescentis (strain ATCC 15703 / DSM 20083 / NCTC 11814 / E194a).